The chain runs to 103 residues: Large ribosomal subunit protein bL21 (103 aa).

The protein belongs to the bacterial ribosomal protein bL21 family. Part of the 50S ribosomal subunit. Contacts protein L20.

This protein binds to 23S rRNA in the presence of protein L20. The protein is Large ribosomal subunit protein bL21 of Legionella pneumophila (strain Lens).